Here is a 426-residue protein sequence, read N- to C-terminus: High affinity 3',5'-cyclic-AMP phosphodiesterase 7A (426 aa).

Residues 80–402 (LDEDYNGQAK…ASWKGLQRQQ (323 aa)) form the PDEase domain. The active-site Proton donor is the His156. The a divalent metal cation site is built by His160, His196, Asp197, and Asp306.

Belongs to the cyclic nucleotide phosphodiesterase family. PDE7 subfamily. In terms of assembly, interacts with CBFA2T3. Requires a divalent metal cation as cofactor.

The protein resides in the cytoplasm. The protein localises to the cytosol. It catalyses the reaction 3',5'-cyclic AMP + H2O = AMP + H(+). It participates in purine metabolism; 3',5'-cyclic AMP degradation; AMP from 3',5'-cyclic AMP: step 1/1. Hydrolyzes the second messenger cAMP, which is a key regulator of many important physiological processes. May have a role in muscle signal transduction. In Rattus norvegicus (Rat), this protein is High affinity 3',5'-cyclic-AMP phosphodiesterase 7A (Pde7a).